We begin with the raw amino-acid sequence, 656 residues long: Tetratricopeptide repeat protein 30 homolog (656 aa).

9 TPR repeats span residues 9-42 (EGEF…NPKN), 43-76 (LAAL…FPQY), 141-174 (AAVI…SGYQ), 176-208 (GLAY…GVKD), 238-271 (IEAF…NEHD), 378-412 (RKTA…DDSL), 416-449 (LPVL…CKEH), 451-484 (TWKL…KYDD), and 537-570 (SIIS…PEKK).

Belongs to the TTC30/dfy-1/fleer family. Component of the IFT complex B composed of at least che-2, che-13, dyf-1, dyf-3, dyf-6, dyf-11, dyf-13, ift-20, ift-74, ift-81, ifta-2, osm-1, osm-5 and osm-6. In terms of tissue distribution, expressed in most amphid, both phasmid and several labial-quadrant neurons.

It localises to the cell projection. Its subcellular location is the cilium. In terms of biological role, plays a role in anterograde intraflagellar transport (IFT), the process by which cilia precursors are transported from the base of the cilium to the site of their incorporation at the tip. Specifically required for the kinesin osm-3 to dock onto and move the IFT particles which contain these precursors. Component of the intraflagellar transport (IFT) complex B required for transport of proteins in the motile cilium. May be required for ciliary entrance and transport of specific ciliary cargo proteins such as che-3 which are related to motility. Required for polyglutamylation of axonemal tubulin in sensory cilia. The protein is Tetratricopeptide repeat protein 30 homolog of Caenorhabditis elegans.